We begin with the raw amino-acid sequence, 274 residues long: Mitochondrial S-adenosylmethionine carrier protein (274 aa).

Solcar repeat units follow at residues 4-77 (PGFT…VKSL), 86-168 (FKPV…LKAL), and 177-265 (VDSW…ARSL). 6 consecutive transmembrane segments (helical) span residues 5–25 (GFTASLVAGGVAGVSVDLILF), 49–69 (IYAGVPSAAVGSFPNAAAFFL), 85–105 (HFKPVKHMLAASTGEVVACLI), 142–162 (RGYKSTVLREIPFSLVQFPLW), 182–202 (SAVCGAFAGGFAAAVTTPLDV), and 238–258 (FAGVLPRMAAISMGGFIFLGA).

It belongs to the mitochondrial carrier (TC 2.A.29) family.

It localises to the mitochondrion inner membrane. The catalysed reaction is S-adenosyl-L-homocysteine(out) + S-adenosyl-L-methionine(in) = S-adenosyl-L-homocysteine(in) + S-adenosyl-L-methionine(out). In terms of biological role, mitochondrial S-adenosyl-L-methionine/S-adenosyl-L-homocysteine antiporter. Mediates the exchange of cytosolic S-adenosyl-L-methionine, the predominant methyl-group donor for macromolecule methylation processes, for mitochondrial S-adenosylhomocysteine(SAH), a by-product of methylation reactions. This Mus musculus (Mouse) protein is Mitochondrial S-adenosylmethionine carrier protein.